We begin with the raw amino-acid sequence, 400 residues long: Acetate kinase (400 aa).

Asparagine 10 contributes to the Mg(2+) binding site. Lysine 17 is an ATP binding site. Arginine 91 contacts substrate. Aspartate 150 acts as the Proton donor/acceptor in catalysis. ATP contacts are provided by residues 210–214 (HLGNG), 285–287 (DCR), and 333–337 (GIGEN). Glutamate 387 is a binding site for Mg(2+).

It belongs to the acetokinase family. Homodimer. Mg(2+) serves as cofactor. It depends on Mn(2+) as a cofactor.

The protein localises to the cytoplasm. It catalyses the reaction acetate + ATP = acetyl phosphate + ADP. The protein operates within metabolic intermediate biosynthesis; acetyl-CoA biosynthesis; acetyl-CoA from acetate: step 1/2. Functionally, catalyzes the formation of acetyl phosphate from acetate and ATP. Can also catalyze the reverse reaction. The chain is Acetate kinase from Pectobacterium atrosepticum (strain SCRI 1043 / ATCC BAA-672) (Erwinia carotovora subsp. atroseptica).